The following is a 667-amino-acid chain: WD repeat-containing protein 48 homolog (667 aa).

WD repeat units follow at residues 26 to 65, 71 to 110, 113 to 152, 164 to 203, 206 to 245, 248 to 287, 290 to 329, and 350 to 389; these read QHRN…NEKY, HHND…CMST, THRD…ALTA, GSKD…RSMK, GHTE…CVQT, VHKE…NKML, EEQA…RCTL, and KGGA…KKEQ. A disordered region spans residues 591–615; it reads ETTPSGGNANNSLQNSQSDANSEGS.

It belongs to the WD repeat WDR48 family. Catalytic component of the Usp12-46 deubiquitylase complex consisting of Usp12-46, Wdr20 and Uaf1; regulatory subunit that, together wtih Wdr20, stabilizes Usp12-46. The Usp12-46 deubiquitylase complex associates with arr/arrow; the interaction leads to deubiquitination and stabilization of arr/arrow.

Functionally, regulatory component of the Usp12-46 deubiquitylase complex. activates deubiquitination by increasing the catalytic turnover without increasing the affinity of deubiquitinating enzymes for the substrate. The complex deubiquitylates the wg/wingless-signaling receptor arr/arrow, which stabilizes the receptor and increases its concentration at the cell surface; this enhances the sensitivity of cells to wg/wingless-signal stimulation. This increases the amplitude and spatial range of the signaling response to the wg/wingless morphogen gradient, facilitating the precise concentration-dependent regulation of its target genes. Together with Wdr20 and Usp12-46 required for wg/wingless-mediated signaling in the wing imaginal disc and for wg/wingless-dependent regulation of intestinal stem cell proliferation. In Drosophila ananassae (Fruit fly), this protein is WD repeat-containing protein 48 homolog.